Consider the following 335-residue polypeptide: Methionine import ATP-binding protein MetN 2 (335 aa).

Residues isoleucine 2–valine 242 enclose the ABC transporter domain. Glycine 38 to serine 45 provides a ligand contact to ATP.

Belongs to the ABC transporter superfamily. Methionine importer (TC 3.A.1.24) family. In terms of assembly, the complex is composed of two ATP-binding proteins (MetN), two transmembrane proteins (MetI) and a solute-binding protein (MetQ).

It localises to the cell inner membrane. It catalyses the reaction L-methionine(out) + ATP + H2O = L-methionine(in) + ADP + phosphate + H(+). It carries out the reaction D-methionine(out) + ATP + H2O = D-methionine(in) + ADP + phosphate + H(+). In terms of biological role, part of the ABC transporter complex MetNIQ involved in methionine import. Responsible for energy coupling to the transport system. This chain is Methionine import ATP-binding protein MetN 2, found in Pseudomonas syringae pv. tomato (strain ATCC BAA-871 / DC3000).